Consider the following 114-residue polypeptide: Putative pterin-4-alpha-carbinolamine dehydratase (114 aa).

The protein belongs to the pterin-4-alpha-carbinolamine dehydratase family.

It carries out the reaction (4aS,6R)-4a-hydroxy-L-erythro-5,6,7,8-tetrahydrobiopterin = (6R)-L-erythro-6,7-dihydrobiopterin + H2O. This Pseudoalteromonas translucida (strain TAC 125) protein is Putative pterin-4-alpha-carbinolamine dehydratase.